The sequence spans 487 residues: N-succinylglutamate 5-semialdehyde dehydrogenase (487 aa).

Residue 221–226 participates in NAD(+) binding; sequence GSSRTG. Residues Glu244 and Cys278 contribute to the active site.

The protein belongs to the aldehyde dehydrogenase family. AstD subfamily.

It carries out the reaction N-succinyl-L-glutamate 5-semialdehyde + NAD(+) + H2O = N-succinyl-L-glutamate + NADH + 2 H(+). Its pathway is amino-acid degradation; L-arginine degradation via AST pathway; L-glutamate and succinate from L-arginine: step 4/5. Its function is as follows. Catalyzes the NAD-dependent reduction of succinylglutamate semialdehyde into succinylglutamate. The sequence is that of N-succinylglutamate 5-semialdehyde dehydrogenase from Pseudomonas putida (strain W619).